The sequence spans 472 residues: Siroheme synthase (472 aa).

The tract at residues M1–L207 is precorrin-2 dehydrogenase /sirohydrochlorin ferrochelatase. NAD(+) contacts are provided by residues E22 to V23 and P43 to R44. S132 is modified (phosphoserine). The interval G221–E472 is uroporphyrinogen-III C-methyltransferase. Residue P230 coordinates S-adenosyl-L-methionine. The active-site Proton acceptor is D253. Residue K275 is the Proton donor of the active site. Residues G306–D308, I311, T336–A337, M388, and G417 each bind S-adenosyl-L-methionine.

It in the N-terminal section; belongs to the precorrin-2 dehydrogenase / sirohydrochlorin ferrochelatase family. This sequence in the C-terminal section; belongs to the precorrin methyltransferase family.

It carries out the reaction uroporphyrinogen III + 2 S-adenosyl-L-methionine = precorrin-2 + 2 S-adenosyl-L-homocysteine + H(+). It catalyses the reaction precorrin-2 + NAD(+) = sirohydrochlorin + NADH + 2 H(+). The catalysed reaction is siroheme + 2 H(+) = sirohydrochlorin + Fe(2+). It participates in cofactor biosynthesis; adenosylcobalamin biosynthesis; precorrin-2 from uroporphyrinogen III: step 1/1. It functions in the pathway cofactor biosynthesis; adenosylcobalamin biosynthesis; sirohydrochlorin from precorrin-2: step 1/1. The protein operates within porphyrin-containing compound metabolism; siroheme biosynthesis; precorrin-2 from uroporphyrinogen III: step 1/1. Its pathway is porphyrin-containing compound metabolism; siroheme biosynthesis; siroheme from sirohydrochlorin: step 1/1. It participates in porphyrin-containing compound metabolism; siroheme biosynthesis; sirohydrochlorin from precorrin-2: step 1/1. In terms of biological role, multifunctional enzyme that catalyzes the SAM-dependent methylations of uroporphyrinogen III at position C-2 and C-7 to form precorrin-2 via precorrin-1. Then it catalyzes the NAD-dependent ring dehydrogenation of precorrin-2 to yield sirohydrochlorin. Finally, it catalyzes the ferrochelation of sirohydrochlorin to yield siroheme. In Nitrosospira multiformis (strain ATCC 25196 / NCIMB 11849 / C 71), this protein is Siroheme synthase.